Consider the following 328-residue polypeptide: Interleukin-12 subunit beta (328 aa).

Residues 1 to 22 (MCHQQLVISWFSLVFLASPLMA) form the signal peptide. An Ig-like C2-type domain is found at 29-106 (DVYVVELDWY…LSHSLLLLHK (78 aa)). Residues Cys-50 and Cys-90 are joined by a disulfide bond. Residues Asn-125, Asn-135, and Asn-222 are each glycosylated (N-linked (GlcNAc...) asparagine). The Fibronectin type-III domain occupies 237 to 328 (PPKNLQLKPL…WSEWASVPCS (92 aa)).

The protein belongs to the IL-12B family. Heterodimer with IL12A; disulfide-linked. The heterodimer is known as interleukin IL-12. Heterodimer with IL23A; disulfide-linked. The heterodimer is known as interleukin IL-23. Also secreted as a monomer. Interacts with NBR1; this interaction promotes IL-12 secretion.

The protein localises to the secreted. Its function is as follows. Cytokine that can act as a growth factor for activated T and NK cells, enhance the lytic activity of NK/lymphokine-activated killer cells, and stimulate the production of IFN-gamma by resting PBMC. In terms of biological role, associates with IL23A to form the IL-23 interleukin, a heterodimeric cytokine which functions in innate and adaptive immunity. IL-23 may constitute with IL-17 an acute response to infection in peripheral tissues. IL-23 binds to a heterodimeric receptor complex composed of IL12RB1 and IL23R, activates the Jak-Stat signaling cascade, stimulates memory rather than naive T-cells and promotes production of pro-inflammatory cytokines. IL-23 induces autoimmune inflammation and thus may be responsible for autoimmune inflammatory diseases and may be important for tumorigenesis. This Macaca mulatta (Rhesus macaque) protein is Interleukin-12 subunit beta (IL12B).